Here is a 511-residue protein sequence, read N- to C-terminus: Maturase K (511 aa).

The protein belongs to the intron maturase 2 family. MatK subfamily.

The protein resides in the plastid. It localises to the chloroplast. In terms of biological role, usually encoded in the trnK tRNA gene intron. Probably assists in splicing its own and other chloroplast group II introns. This chain is Maturase K, found in Bowiea volubilis (Climbing onion).